We begin with the raw amino-acid sequence, 141 residues long: Hemoglobin subunit alpha (141 aa).

Positions 1–141 (VLSPADKTNV…VSTVLTSKYR (141 aa)) constitute a Globin domain. Residue Ser3 is modified to Phosphoserine. Lys7 carries the N6-succinyllysine modification. A Phosphothreonine modification is found at Thr8. N6-succinyllysine is present on Lys11. Lys16 carries the N6-acetyllysine; alternate modification. An N6-succinyllysine; alternate modification is found at Lys16. Position 24 is a phosphotyrosine (Tyr24). The residue at position 35 (Ser35) is a Phosphoserine. Lys40 carries the N6-succinyllysine modification. Ser49 is subject to Phosphoserine. His58 contacts O2. A heme b-binding site is contributed by His87. Residue Ser102 is modified to Phosphoserine. Position 108 is a phosphothreonine (Thr108). Ser124 bears the Phosphoserine mark. Residues Thr134 and Thr137 each carry the phosphothreonine modification. Ser138 is modified (phosphoserine).

The protein belongs to the globin family. As to quaternary structure, heterotetramer of two alpha chains and two beta chains. Red blood cells.

Functionally, involved in oxygen transport from the lung to the various peripheral tissues. The sequence is that of Hemoglobin subunit alpha from Tamias merriami (Merriam's chipmunk).